Consider the following 308-residue polypeptide: UPF0282 protein SSO3251 (308 aa).

The protein belongs to the UPF0282 family.

The chain is UPF0282 protein SSO3251 from Saccharolobus solfataricus (strain ATCC 35092 / DSM 1617 / JCM 11322 / P2) (Sulfolobus solfataricus).